We begin with the raw amino-acid sequence, 167 residues long: Phosphopantetheine adenylyltransferase (167 aa).

A substrate-binding site is contributed by threonine 10. ATP-binding positions include 10-11 and histidine 18; that span reads TF. Residues lysine 42, leucine 75, and arginine 89 each contribute to the substrate site. Residues 90-92, glutamate 100, and 125-131 contribute to the ATP site; these read GVR and YTYVASS.

It belongs to the bacterial CoaD family. Homohexamer. It depends on Mg(2+) as a cofactor.

Its subcellular location is the cytoplasm. The catalysed reaction is (R)-4'-phosphopantetheine + ATP + H(+) = 3'-dephospho-CoA + diphosphate. Its pathway is cofactor biosynthesis; coenzyme A biosynthesis; CoA from (R)-pantothenate: step 4/5. Reversibly transfers an adenylyl group from ATP to 4'-phosphopantetheine, yielding dephospho-CoA (dPCoA) and pyrophosphate. The protein is Phosphopantetheine adenylyltransferase of Chlorobium phaeobacteroides (strain DSM 266 / SMG 266 / 2430).